The following is a 220-amino-acid chain: 7-cyano-7-deazaguanine synthase 1 (220 aa).

10-20 (FSGGIDSTVLL) serves as a coordination point for ATP. Residues Cys183, Cys191, Cys194, and Cys197 each contribute to the Zn(2+) site.

This sequence belongs to the QueC family. Homodimer. Zn(2+) is required as a cofactor.

The catalysed reaction is 7-carboxy-7-deazaguanine + NH4(+) + ATP = 7-cyano-7-deazaguanine + ADP + phosphate + H2O + H(+). It functions in the pathway purine metabolism; 7-cyano-7-deazaguanine biosynthesis. Its function is as follows. Catalyzes the ATP-dependent conversion of 7-carboxy-7-deazaguanine (CDG) to 7-cyano-7-deazaguanine (preQ(0)). The polypeptide is 7-cyano-7-deazaguanine synthase 1 (Desulfitobacterium hafniense (strain Y51)).